The sequence spans 151 residues: Small ribosomal subunit protein uS13 (151 aa).

The interval 131 to 151 is disordered; sequence RGQRTKSSFRRGRTVGVKKKQ. Over residues 133–151 the composition is skewed to basic residues; sequence QRTKSSFRRGRTVGVKKKQ.

Belongs to the universal ribosomal protein uS13 family. As to quaternary structure, part of the 30S ribosomal subunit. Forms a loose heterodimer with protein S19. Forms two bridges to the 50S subunit in the 70S ribosome.

Located at the top of the head of the 30S subunit, it contacts several helices of the 16S rRNA. In the 70S ribosome it contacts the 23S rRNA (bridge B1a) and protein L5 of the 50S subunit (bridge B1b), connecting the 2 subunits; these bridges are implicated in subunit movement. The polypeptide is Small ribosomal subunit protein uS13 (Methanopyrus kandleri (strain AV19 / DSM 6324 / JCM 9639 / NBRC 100938)).